Reading from the N-terminus, the 240-residue chain is Transmembrane protein 65 (240 aa).

A mitochondrion-targeting transit peptide spans Met1 to Glu61. At Pro62 to Thr110 the chain is on the cytoplasmic side. The helical transmembrane segment at Pro111 to Leu131 threads the bilayer. Topologically, residues Asp132 to His142 are extracellular. The chain crosses the membrane as a helical span at residues Ile143–Val165. Over Ser166–Lys209 the chain is Cytoplasmic. Residues Ala210 to Gly230 traverse the membrane as a helical segment. Over Glu231–Ser240 the chain is Extracellular.

Monomer. Homodimer. Interacts with GJA1. Interacts weakly with DSP. Interacts with SCN1B. As to expression, predominantly expressed the ventricular tissue (at protein level).

The protein localises to the cell membrane. Its subcellular location is the mitochondrion inner membrane. Functionally, essential for maintaining proper cardiac intercalated disk (ICD) structure and function as well as cardiac conduction velocity in the heart. Its association with SCN1B is required for stabilizing the perinexus in the ICD and for localization of GJA1 and SCN5A to the ICD. May regulate the function of the gap junction protein GJA1 and may contribute to the stability and proper localization of GJA1 to cardiac intercalated disk thereby regulating gap junction communication. May also play a role in the regulation of mitochondrial respiration and mitochondrial DNA copy number maintenance. In Homo sapiens (Human), this protein is Transmembrane protein 65 (TMEM65).